We begin with the raw amino-acid sequence, 136 residues long: T-cell receptor beta chain V region LB2 (136 aa).

The first 21 residues, 1–21 (MNKWVFCWVTLCLLTVETTHG), serve as a signal peptide directing secretion. Residues 22–116 (DGGIITQTPK…EMTVFLCASS (95 aa)) are v segment. Cys-45 and Cys-113 are oxidised to a cystine. A d segment region spans residues 117 to 120 (IRLA). Residues 121-136 (SAETLYFGSGTRLTVL) are j segment.

The sequence is that of T-cell receptor beta chain V region LB2 from Mus musculus (Mouse).